The primary structure comprises 70 residues: Small ribosomal subunit protein bS21B (70 aa).

Residues 37 to 70 form a disordered region; that stretch reads SYEKPTTERKRKKAAAVARLRKQVRRSMPPKKKY. Over residues 45 to 70 the composition is skewed to basic residues; it reads RKRKKAAAVARLRKQVRRSMPPKKKY.

This sequence belongs to the bacterial ribosomal protein bS21 family.

This is Small ribosomal subunit protein bS21B from Burkholderia pseudomallei (strain K96243).